The primary structure comprises 130 residues: Holo-[acyl-carrier-protein] synthase (130 aa).

Mg(2+) is bound by residues aspartate 9 and glutamate 58.

This sequence belongs to the P-Pant transferase superfamily. AcpS family. Mg(2+) is required as a cofactor.

It is found in the cytoplasm. It catalyses the reaction apo-[ACP] + CoA = holo-[ACP] + adenosine 3',5'-bisphosphate + H(+). Transfers the 4'-phosphopantetheine moiety from coenzyme A to a Ser of acyl-carrier-protein. In Mycobacterium bovis (strain ATCC BAA-935 / AF2122/97), this protein is Holo-[acyl-carrier-protein] synthase.